Consider the following 210-residue polypeptide: ATP phosphoribosyltransferase (210 aa).

This sequence belongs to the ATP phosphoribosyltransferase family. Short subfamily. In terms of assembly, heteromultimer composed of HisG and HisZ subunits.

It is found in the cytoplasm. It catalyses the reaction 1-(5-phospho-beta-D-ribosyl)-ATP + diphosphate = 5-phospho-alpha-D-ribose 1-diphosphate + ATP. Its pathway is amino-acid biosynthesis; L-histidine biosynthesis; L-histidine from 5-phospho-alpha-D-ribose 1-diphosphate: step 1/9. Functionally, catalyzes the condensation of ATP and 5-phosphoribose 1-diphosphate to form N'-(5'-phosphoribosyl)-ATP (PR-ATP). Has a crucial role in the pathway because the rate of histidine biosynthesis seems to be controlled primarily by regulation of HisG enzymatic activity. The protein is ATP phosphoribosyltransferase of Petrotoga mobilis (strain DSM 10674 / SJ95).